The following is a 967-amino-acid chain: Phosphoenolpyruvate carboxylase (967 aa).

Phosphoserine is present on serine 11. Residues histidine 172 and lysine 601 contribute to the active site.

Belongs to the PEPCase type 1 family. In terms of assembly, homotetramer. Mg(2+) is required as a cofactor.

The protein resides in the cytoplasm. It carries out the reaction oxaloacetate + phosphate = phosphoenolpyruvate + hydrogencarbonate. It functions in the pathway photosynthesis; C3 acid pathway. Its activity is regulated as follows. By light-reversible phosphorylation. Through the carboxylation of phosphoenolpyruvate (PEP) it forms oxaloacetate, a four-carbon dicarboxylic acid source for the tricarboxylic acid cycle. This chain is Phosphoenolpyruvate carboxylase (PPCA1), found in Flaveria pringlei.